The primary structure comprises 282 residues: Nucleotide-binding protein PXO_02223 (282 aa).

An ATP-binding site is contributed by 5-12 (GLSGSGKS). 57–60 (DVRS) provides a ligand contact to GTP.

This sequence belongs to the RapZ-like family.

In terms of biological role, displays ATPase and GTPase activities. The protein is Nucleotide-binding protein PXO_02223 of Xanthomonas oryzae pv. oryzae (strain PXO99A).